Consider the following 392-residue polypeptide: uncharacterized protein (392 aa).

The next 10 membrane-spanning stretches (helical) occupy residues 2-23, 38-60, 73-95, 153-175, 195-217, 237-259, 272-291, 297-319, 331-353, and 357-379; these read WLANFFVSASTTMIVPFLSLYI, SGYVFGITFLMAFLVSPFWGRFG, GTGIALSIFFMGFVTSVYQLFFL, FTYTFFITSFVIFSSVLLVLFGV, VLSYIFHHPALWVMMLLTMLIQT, VNLAFFSGMAFSATGLGSLLLAR, RILIGLLLAASFFFIPQALA, LLVFRFLFGMAMGGLLPCITAAI, VLGYNVSFRFLGNVLGPLLGGII, and FTISATFYVTAFLFFAGACMLWI.

Belongs to the major facilitator superfamily.

It localises to the cell membrane. This is an uncharacterized protein from Bacillus subtilis (strain 168).